A 303-amino-acid polypeptide reads, in one-letter code: Geranylgeranyl pyrophosphate synthase (303 aa).

Isopentenyl diphosphate-binding residues include Lys32, Arg35, and His64. Mg(2+) contacts are provided by Asp71 and Asp75. Arg80 contacts dimethylallyl diphosphate. Position 81 (Arg81) interacts with isopentenyl diphosphate. 5 residues coordinate dimethylallyl diphosphate: Lys158, Thr159, Gln192, Lys209, and Lys219.

Belongs to the FPP/GGPP synthase family. As to quaternary structure, homooligomer. Requires Mg(2+) as cofactor.

The protein resides in the cytoplasm. The catalysed reaction is isopentenyl diphosphate + dimethylallyl diphosphate = (2E)-geranyl diphosphate + diphosphate. It carries out the reaction isopentenyl diphosphate + (2E)-geranyl diphosphate = (2E,6E)-farnesyl diphosphate + diphosphate. It catalyses the reaction isopentenyl diphosphate + (2E,6E)-farnesyl diphosphate = (2E,6E,10E)-geranylgeranyl diphosphate + diphosphate. It functions in the pathway isoprenoid biosynthesis; farnesyl diphosphate biosynthesis; farnesyl diphosphate from geranyl diphosphate and isopentenyl diphosphate: step 1/1. The protein operates within isoprenoid biosynthesis; geranyl diphosphate biosynthesis; geranyl diphosphate from dimethylallyl diphosphate and isopentenyl diphosphate: step 1/1. It participates in isoprenoid biosynthesis; geranylgeranyl diphosphate biosynthesis; geranylgeranyl diphosphate from farnesyl diphosphate and isopentenyl diphosphate: step 1/1. Catalyzes the trans-addition of the three molecules of IPP onto DMAPP to form geranylgeranyl pyrophosphate, an important precursor of carotenoids and geranylated proteins. This chain is Geranylgeranyl pyrophosphate synthase (ggps1), found in Dictyostelium discoideum (Social amoeba).